Consider the following 496-residue polypeptide: COP9 signalosome complex subunit 3 (496 aa).

Positions Q243–F411 constitute a PCI domain. The tract at residues G468–R496 is disordered. Positions G483–R496 are enriched in acidic residues.

Belongs to the CSN3 family. As to quaternary structure, component of the COP9 signalosome (CSN) complex.

It is found in the cytoplasm. It localises to the nucleus. Component of the COP9 signalosome (CSN) complex that acts as an regulator of the ubiquitin (Ubl) conjugation pathway by mediating the deneddylation of the cullin subunit of SCF-type E3 ubiquitin-protein ligase complexes. The CSN complex seems to link protein degradation to sexual development. This Emericella nidulans (strain FGSC A4 / ATCC 38163 / CBS 112.46 / NRRL 194 / M139) (Aspergillus nidulans) protein is COP9 signalosome complex subunit 3 (csnC).